A 72-amino-acid chain; its full sequence is DNA-directed RNA polymerase subunit epsilon (72 aa).

This sequence belongs to the RNA polymerase subunit epsilon family. RNAP is composed of a core of 2 alpha, a beta and a beta' subunit. The core is associated with a delta subunit, and at least one of epsilon or omega. When a sigma factor is associated with the core the holoenzyme is formed, which can initiate transcription.

The enzyme catalyses RNA(n) + a ribonucleoside 5'-triphosphate = RNA(n+1) + diphosphate. Functionally, a non-essential component of RNA polymerase (RNAP). The chain is DNA-directed RNA polymerase subunit epsilon from Lactiplantibacillus plantarum (strain ATCC BAA-793 / NCIMB 8826 / WCFS1) (Lactobacillus plantarum).